A 341-amino-acid polypeptide reads, in one-letter code: UDP-3-O-acylglucosamine N-acyltransferase (341 aa).

The active-site Proton acceptor is the His241.

This sequence belongs to the transferase hexapeptide repeat family. LpxD subfamily. Homotrimer.

The catalysed reaction is a UDP-3-O-[(3R)-3-hydroxyacyl]-alpha-D-glucosamine + a (3R)-hydroxyacyl-[ACP] = a UDP-2-N,3-O-bis[(3R)-3-hydroxyacyl]-alpha-D-glucosamine + holo-[ACP] + H(+). The protein operates within bacterial outer membrane biogenesis; LPS lipid A biosynthesis. In terms of biological role, catalyzes the N-acylation of UDP-3-O-acylglucosamine using 3-hydroxyacyl-ACP as the acyl donor. Is involved in the biosynthesis of lipid A, a phosphorylated glycolipid that anchors the lipopolysaccharide to the outer membrane of the cell. This Histophilus somni (strain 129Pt) (Haemophilus somnus) protein is UDP-3-O-acylglucosamine N-acyltransferase.